The sequence spans 136 residues: Large ribosomal subunit protein uL16 (136 aa).

This sequence belongs to the universal ribosomal protein uL16 family. In terms of assembly, part of the 50S ribosomal subunit.

Binds 23S rRNA and is also seen to make contacts with the A and possibly P site tRNAs. This is Large ribosomal subunit protein uL16 from Mannheimia succiniciproducens (strain KCTC 0769BP / MBEL55E).